Consider the following 177-residue polypeptide: MESCPSVKNILLLDSEGKRVAVKYYTDDWPTLSAKLAFEKSVFVKTQKATAGAEAEIVMFDGHIVVYKFIQDLHFFVTGGEEENELILASVLQGFTDAVDIILRNNVDKRTALENLDLILLCLDEIVDGGIVLETEGSVIAEKVSAHGIEGATSLAEQTIVQALTTAREHLTKSLLM.

It belongs to the adaptor complexes small subunit family. In terms of assembly, oligomeric complex that consists of at least the alpha, beta, beta', gamma, delta, epsilon and zeta subunits.

Its subcellular location is the cytoplasm. The protein localises to the golgi apparatus membrane. It localises to the cytoplasmic vesicle. It is found in the COPI-coated vesicle membrane. Functionally, the coatomer is a cytosolic protein complex that binds to dilysine motifs and reversibly associates with Golgi non-clathrin-coated vesicles, which further mediate biosynthetic protein transport from the ER, via the Golgi up to the trans Golgi network. Coatomer complex is required for budding from Golgi membranes, and is essential for the retrograde Golgi-to-ER transport of dilysine-tagged proteins. The zeta subunit may be involved in regulating the coat assembly and, hence, the rate of biosynthetic protein transport due to its association-dissociation properties with the coatomer complex. The sequence is that of Coatomer subunit zeta-1 (COPZ1) from Oryza sativa subsp. japonica (Rice).